The following is a 293-amino-acid chain: Cytosolic Fe-S cluster assembly factor CFD1 (293 aa).

ATP is bound at residue Gly-25 to Ser-32. [4Fe-4S] cluster-binding residues include Cys-201 and Cys-204. A Phosphoserine modification is found at Ser-291.

It belongs to the Mrp/NBP35 ATP-binding proteins family. NUBP2/CFD1 subfamily. In terms of assembly, heterotetramer of 2 NBP35 and 2 CFD1 chains. [4Fe-4S] cluster serves as cofactor.

Its subcellular location is the cytoplasm. Functionally, component of the cytosolic iron-sulfur (Fe/S) protein assembly (CIA) machinery. Required for maturation of extramitochondrial Fe-S proteins. The NBP35-CFD1 heterotetramer forms a Fe-S scaffold complex, mediating the de novo assembly of an Fe-S cluster and its transfer to target apoproteins. Nucleotide binding/hydrolysis seems to be critcal for loading of Fe-S clusters onto CFD1 and NBP35. Required for biogenesis and export of both ribosomal subunits, which may reflect a role in assembly of the Fe/S clusters in RLI1, a protein which performs rRNA processing and ribosome export. This chain is Cytosolic Fe-S cluster assembly factor CFD1, found in Saccharomyces cerevisiae (strain ATCC 204508 / S288c) (Baker's yeast).